The following is a 262-amino-acid chain: Aconitate isomerase (262 aa).

The N-terminal stretch at 1–22 is a signal peptide; the sequence is MFPRLPTLALGALLLASTPLLA.

In terms of assembly, monomer.

The catalysed reaction is trans-aconitate = cis-aconitate. With respect to regulation, activated more than 1.5 fold by Ca(2+), Mg(2+), Mn(2+), Ni(2+), Fe(2+), DDT and 1,10-phenanthroline. Strongly inhibited by Ag(+) and Hg(+). Inhibited by addition of 20% (v/v) glycerol. No effect by addition of NADH or NADPH. In terms of biological role, involved in assimilation of trans-aconitic acid. Preference for cis-aconitic acid is 14-fold higher than for trans-aconitic acid. Not active on intermediates of tricarboxylic acid (TCA) cycle including citric acid, succinic acid, fumaric acid, and 2-oxoglutaric acid or on other dicarboxilic acids including itaconic acid, formic acid, citraconic acid or maleic acid. This chain is Aconitate isomerase, found in Pseudomonas sp.